A 112-amino-acid chain; its full sequence is Large ribosomal subunit protein eL34A (112 aa).

It belongs to the eukaryotic ribosomal protein eL34 family. As to quaternary structure, component of the large ribosomal subunit (LSU). Mature yeast ribosomes consist of a small (40S) and a large (60S) subunit. The 40S small subunit contains 1 molecule of ribosomal RNA (18S rRNA) and at least 33 different proteins. The large 60S subunit contains 3 rRNA molecules (25S, 5.8S and 5S rRNA) and at least 46 different proteins.

It is found in the cytoplasm. Component of the ribosome, a large ribonucleoprotein complex responsible for the synthesis of proteins in the cell. The small ribosomal subunit (SSU) binds messenger RNAs (mRNAs) and translates the encoded message by selecting cognate aminoacyl-transfer RNA (tRNA) molecules. The large subunit (LSU) contains the ribosomal catalytic site termed the peptidyl transferase center (PTC), which catalyzes the formation of peptide bonds, thereby polymerizing the amino acids delivered by tRNAs into a polypeptide chain. The nascent polypeptides leave the ribosome through a tunnel in the LSU and interact with protein factors that function in enzymatic processing, targeting, and the membrane insertion of nascent chains at the exit of the ribosomal tunnel. This Schizosaccharomyces pombe (strain 972 / ATCC 24843) (Fission yeast) protein is Large ribosomal subunit protein eL34A (rpl3401).